The following is a 565-amino-acid chain: Putative pentatricopeptide repeat-containing protein At3g05240 (565 aa).

PPR repeat units lie at residues 37 to 70 (NVIP…IDCP), 71 to 105 (SVYI…GYSP), 106 to 140 (DYFT…GFEV), 141 to 171 (NMYV…IPQW), 172 to 206 (NVVA…GVKA), 207 to 241 (NETI…GFDP), 250 to 280 (NVIL…MPER), 281 to 315 (TLVS…GIAP), 316 to 350 (DKVT…GFVK), 351 to 381 (DAAI…LEKK), 382 to 416 (DTIA…GNAT), 418 to 448 (DGIT…MRDL), and 454 to 484 (TVEH…MPVK). The tract at residues 489 to 564 (IWGALLNGCD…VLGHSSVETM (76 aa)) is type E motif.

The protein belongs to the PPR family. PCMP-E subfamily.

The polypeptide is Putative pentatricopeptide repeat-containing protein At3g05240 (PCMP-E82) (Arabidopsis thaliana (Mouse-ear cress)).